A 243-amino-acid chain; its full sequence is Ubiquinone/menaquinone biosynthesis C-methyltransferase UbiE (243 aa).

Residues T69, D90, and 116–117 (DA) contribute to the S-adenosyl-L-methionine site.

The protein belongs to the class I-like SAM-binding methyltransferase superfamily. MenG/UbiE family.

It catalyses the reaction a 2-demethylmenaquinol + S-adenosyl-L-methionine = a menaquinol + S-adenosyl-L-homocysteine + H(+). It carries out the reaction a 2-methoxy-6-(all-trans-polyprenyl)benzene-1,4-diol + S-adenosyl-L-methionine = a 5-methoxy-2-methyl-3-(all-trans-polyprenyl)benzene-1,4-diol + S-adenosyl-L-homocysteine + H(+). Its pathway is quinol/quinone metabolism; menaquinone biosynthesis; menaquinol from 1,4-dihydroxy-2-naphthoate: step 2/2. The protein operates within cofactor biosynthesis; ubiquinone biosynthesis. Its function is as follows. Methyltransferase required for the conversion of demethylmenaquinol (DMKH2) to menaquinol (MKH2) and the conversion of 2-polyprenyl-6-methoxy-1,4-benzoquinol (DDMQH2) to 2-polyprenyl-3-methyl-6-methoxy-1,4-benzoquinol (DMQH2). In Burkholderia cenocepacia (strain ATCC BAA-245 / DSM 16553 / LMG 16656 / NCTC 13227 / J2315 / CF5610) (Burkholderia cepacia (strain J2315)), this protein is Ubiquinone/menaquinone biosynthesis C-methyltransferase UbiE.